The sequence spans 433 residues: Enolase (433 aa).

(2R)-2-phosphoglycerate is bound at residue Gln164. Glu206 functions as the Proton donor in the catalytic mechanism. Residues Asp243, Glu289, and Asp316 each contribute to the Mg(2+) site. Positions 341, 370, 371, and 392 each coordinate (2R)-2-phosphoglycerate. The active-site Proton acceptor is Lys341.

The protein belongs to the enolase family. Requires Mg(2+) as cofactor.

The protein resides in the cytoplasm. The protein localises to the secreted. Its subcellular location is the cell surface. It catalyses the reaction (2R)-2-phosphoglycerate = phosphoenolpyruvate + H2O. It participates in carbohydrate degradation; glycolysis; pyruvate from D-glyceraldehyde 3-phosphate: step 4/5. Its function is as follows. Catalyzes the reversible conversion of 2-phosphoglycerate (2-PG) into phosphoenolpyruvate (PEP). It is essential for the degradation of carbohydrates via glycolysis. In Borreliella burgdorferi (strain ZS7) (Borrelia burgdorferi), this protein is Enolase.